The primary structure comprises 309 residues: Olfactory receptor 14A16 (309 aa).

The Extracellular portion of the chain corresponds to 1–23; sequence MANLTIVTEFILMGFSTNKNMCI. Asn-3 carries an N-linked (GlcNAc...) asparagine glycan. A helical membrane pass occupies residues 24 to 44; the sequence is LHSILFLLIYLCALMGNVLII. The Cytoplasmic portion of the chain corresponds to 45–52; that stretch reads MITTLDHH. The chain crosses the membrane as a helical span at residues 53-73; the sequence is LHTPVYFFLKNLSFLDLCLIS. At 74–97 the chain is on the extracellular side; it reads VTAPKSIANSLIHNNSISFLGCVS. Asn-87 is a glycosylation site (N-linked (GlcNAc...) asparagine). Cys-95 and Cys-187 are disulfide-bonded. Residues 98 to 118 traverse the membrane as a helical segment; the sequence is QVFLLLSSASAELLLLTVMSF. The Cytoplasmic segment spans residues 119–131; sequence DRYTAICHPLHYD. The helical transmembrane segment at 132–152 threads the bilayer; it reads VIMDRSTCVQRATVSWLYGGL. The Extracellular portion of the chain corresponds to 153 to 194; it reads IAVMHTAGTFSLSYCGSNMVHQFFCDIPQLLAISCSENLIRE. The helical transmembrane segment at 195-215 threads the bilayer; that stretch reads IALILINVVLDFCCFIVIIIT. Over 216 to 235 the chain is Cytoplasmic; sequence YVHVFSTVKKIPSTEGQSKA. The chain crosses the membrane as a helical span at residues 236-255; that stretch reads YSICLPHLLVVLFLSTGFIA. Residues 256 to 268 are Extracellular-facing; that stretch reads YLKPASESPSILD. Residues 269 to 289 form a helical membrane-spanning segment; the sequence is AVISVFYTMLPPTFNPIIYSL. Residues 290–309 are Cytoplasmic-facing; that stretch reads RNKAIKVALGMLIKGKLTKK.

Belongs to the G-protein coupled receptor 1 family.

The protein localises to the cell membrane. Its function is as follows. Odorant receptor. The polypeptide is Olfactory receptor 14A16 (OR14A16) (Homo sapiens (Human)).